A 134-amino-acid chain; its full sequence is UPF0102 protein Adeh_1910 (134 aa).

Belongs to the UPF0102 family.

The protein is UPF0102 protein Adeh_1910 of Anaeromyxobacter dehalogenans (strain 2CP-C).